A 501-amino-acid chain; its full sequence is DDB1- and CUL4-associated factor 12-like protein 1 (501 aa).

The segment covering 1–37 (MRQADSQTQPSPAEQETPQPAGPSNRSPPTMGPQQTG) has biased composition (polar residues). Positions 1-67 (MRQADSQTQP…PAAPMATAGE (67 aa)) are disordered. WD repeat units lie at residues 185 to 225 (PPSC…PVCL), 230 to 268 (GHRD…FNGS), 298 to 337 (PGNR…SRLL), and 384 to 423 (SREG…FLEE).

It belongs to the WD repeat DCAF12 family.

The sequence is that of DDB1- and CUL4-associated factor 12-like protein 1 (Dcaf12l1) from Mus musculus (Mouse).